The sequence spans 373 residues: Erythronate-4-phosphate dehydrogenase (373 aa).

Residues serine 45 and threonine 67 each contribute to the substrate site. NAD(+) is bound by residues aspartate 147, alanine 206–arginine 208, and aspartate 232. Arginine 208 is a catalytic residue. Glutamate 237 is a catalytic residue. Histidine 254 serves as the catalytic Proton donor. Glycine 257 contacts NAD(+). Residue tyrosine 258 participates in substrate binding.

This sequence belongs to the D-isomer specific 2-hydroxyacid dehydrogenase family. PdxB subfamily. Homodimer.

The protein localises to the cytoplasm. It carries out the reaction 4-phospho-D-erythronate + NAD(+) = (R)-3-hydroxy-2-oxo-4-phosphooxybutanoate + NADH + H(+). The protein operates within cofactor biosynthesis; pyridoxine 5'-phosphate biosynthesis; pyridoxine 5'-phosphate from D-erythrose 4-phosphate: step 2/5. Functionally, catalyzes the oxidation of erythronate-4-phosphate to 3-hydroxy-2-oxo-4-phosphonooxybutanoate. This chain is Erythronate-4-phosphate dehydrogenase, found in Tolumonas auensis (strain DSM 9187 / NBRC 110442 / TA 4).